Reading from the N-terminus, the 78-residue chain is Defensin-like protein 287 (78 aa).

The first 24 residues, 1–24 (MNNLRVIMSVLLAVLVFTATVSES), serve as a signal peptide directing secretion. 3 disulfide bridges follow: Cys-39–Cys-59, Cys-45–Cys-64, and Cys-51–Cys-66.

The protein belongs to the DEFL family.

The protein resides in the secreted. This is Defensin-like protein 287 from Arabidopsis thaliana (Mouse-ear cress).